We begin with the raw amino-acid sequence, 522 residues long: Maturase K (522 aa).

Belongs to the intron maturase 2 family. MatK subfamily.

The protein localises to the plastid. It localises to the chloroplast. Its function is as follows. Usually encoded in the trnK tRNA gene intron. Probably assists in splicing its own and other chloroplast group II introns. The polypeptide is Maturase K (Iris domestica (Leopard lily)).